Consider the following 258-residue polypeptide: Synapse differentiation-inducing gene protein 1 (258 aa).

Over 1-181 the chain is Cytoplasmic; it reads MDGIIEQKSM…NFLMMPPRDH (181 aa). Residue S137 is modified to Phosphoserine. A helical transmembrane segment spans residues 182 to 202; it reads LGLSVFSMLCCFWPLGIAAFY. Residues 203 to 228 are Extracellular-facing; the sequence is LSHETNKAVAKGDLHQASTSSRRALF. Residues 229–249 constitute an intramembrane region (helical); that stretch reads LAVLSITIGTGVYVGVAVALI. The Extracellular portion of the chain corresponds to 250–258; the sequence is AYLSKNNHL.

It belongs to the CD225/Dispanin family. In terms of assembly, homodimer. Interacts with GRIA1 and GRIA2.

The protein localises to the cell membrane. It localises to the early endosome membrane. It is found in the postsynaptic density membrane. Its subcellular location is the synapse. The protein resides in the cell projection. The protein localises to the dendrite. It localises to the dendritic spine. Its function is as follows. May regulate AMPA receptor content at nascent synapses, and have a role in postsynaptic development and maturation. The protein is Synapse differentiation-inducing gene protein 1 (SYNDIG1) of Macaca fascicularis (Crab-eating macaque).